Reading from the N-terminus, the 326-residue chain is MNPNYIILFFLVVAVIVLFYFVGSSVSLWIQALVSGARVGLLNIVFMRFRKVPPKLIVESKIMATKAGLDISSDELESHYLAGGNVSRVVQALIAADKAKIELSFNRSAAIDLAGRDVLEAVQMSVNPKVIETPMIAAMAKDGIQLKAISRVTVRANIDRLVGGAGEETILARVGEGIVTTIGSADSHKHVLENPDLISKRVLEKGLDSGTAFEILSIDIADVDVGKNIGAELETDRAEADKKIAQAKAEERRAMAYAREQEMKAQVEEMRAKVVEAEAKIPLAMANAFEKGNLGIMDYYRMKNIMADTQMRDTIGSPDRETPREK.

Helical transmembrane passes span 6 to 26 and 27 to 47; these read IILFFLVVAVIVLFYFVGSSV and SLWIQALVSGARVGLLNIVFM.

It belongs to the flotillin-like FloA family. As to quaternary structure, homooligomerizes.

It localises to the cell membrane. It is found in the membrane raft. Functionally, found in functional membrane microdomains (FMM) that may be equivalent to eukaryotic membrane rafts. FMMs are highly dynamic and increase in number as cells age. Flotillins are thought to be important factors in membrane fluidity. The chain is Flotillin-like protein FloA from Desulfosudis oleivorans (strain DSM 6200 / JCM 39069 / Hxd3) (Desulfococcus oleovorans).